Reading from the N-terminus, the 96-residue chain is UPF0358 protein Aflv_1873 (96 aa).

This sequence belongs to the UPF0358 family.

In Anoxybacillus flavithermus (strain DSM 21510 / WK1), this protein is UPF0358 protein Aflv_1873.